A 293-amino-acid polypeptide reads, in one-letter code: Putative immediate early glycoprotein (293 aa).

A signal peptide spans M1 to T21. 9 N-linked (GlcNAc...) asparagine; by host glycosylation sites follow: N23, N55, N83, N120, N150, N156, N168, N212, and N249. A helical transmembrane segment spans residues L262 to I282.

Belongs to the herpesviridae immediate early glycoprotein family.

The protein resides in the membrane. The polypeptide is Putative immediate early glycoprotein (U18) (Human herpesvirus 6A (strain Uganda-1102) (HHV-6 variant A)).